We begin with the raw amino-acid sequence, 281 residues long: Histidine biosynthesis bifunctional protein hisIE, chloroplastic (281 aa).

The transit peptide at 1–50 (MAVSYNALAQSLARSSCFIPKPYSFRDTKLRSRSNVVFACNDNKNIALQA) directs the protein to the chloroplast. Positions 51–178 (KVDNLLDRIK…NKLALTTLYS (128 aa)) are phosphoribosyl-AMP cyclohydrolase. The tract at residues 179 to 281 (LESIISKRKE…GIEEKQNRTK (103 aa)) is phosphoribosyl-ATP pyrophosphohydrolase.

The protein in the N-terminal section; belongs to the PRA-CH family. In the C-terminal section; belongs to the PRA-PH family. Ubiquitously expressed throughout development.

The protein resides in the plastid. It localises to the chloroplast. It carries out the reaction 1-(5-phospho-beta-D-ribosyl)-ATP + H2O = 1-(5-phospho-beta-D-ribosyl)-5'-AMP + diphosphate + H(+). It catalyses the reaction 1-(5-phospho-beta-D-ribosyl)-5'-AMP + H2O = 1-(5-phospho-beta-D-ribosyl)-5-[(5-phospho-beta-D-ribosylamino)methylideneamino]imidazole-4-carboxamide. It functions in the pathway amino-acid biosynthesis; L-histidine biosynthesis; L-histidine from 5-phospho-alpha-D-ribose 1-diphosphate: step 2/9. It participates in amino-acid biosynthesis; L-histidine biosynthesis; L-histidine from 5-phospho-alpha-D-ribose 1-diphosphate: step 3/9. The chain is Histidine biosynthesis bifunctional protein hisIE, chloroplastic (HISN2) from Arabidopsis thaliana (Mouse-ear cress).